A 318-amino-acid chain; its full sequence is Ubiquitin-conjugating enzyme E2 J1 (318 aa).

At 1-282 the chain is on the cytoplasmic side; it reads METRYNLKSP…QGHQPRDNHT (282 aa). The UBC core domain maps to 10–160; it reads PAVKRLMKEA…GCGSAMKDVL (151 aa). C91 acts as the Glycyl thioester intermediate in catalysis. The residue at position 184 (S184) is a Phosphoserine; by MAPKAPK2. A compositionally biased stretch (polar residues) spans 229–248; it reads LQNSSAASFHQPTQPVAKNT. A disordered region spans residues 229 to 283; it reads LQNSSAASFHQPTQPVAKNTSMSPRQRRAQQQSQRRLSTSPDVIQGHQPRDNHTD. The segment covering 249–268 has biased composition (low complexity); the sequence is SMSPRQRRAQQQSQRRLSTS. Phosphoserine occurs at positions 266 and 268. The helical; Anchor for type IV membrane protein transmembrane segment at 283–303 threads the bilayer; the sequence is DHGGSAVLIVILTLALAALIF. Residues 304–318 are Lumenal-facing; the sequence is RRIYLANEYIFDFEL.

The protein belongs to the ubiquitin-conjugating enzyme family. In terms of assembly, component of the HRD1 complex, which comprises at least SYNV1/HRD1, DERL1/2, FAM8A1, HERPUD1/HERP, OS9, SEL1L and UBE2J1. Interacts with E3 ligase RNF26. Interacts with E3 ligase RNF133. In terms of processing, phosphorylated at Ser-184 in a cytosolic stress-dependent manner by MAP kinase p38 MAPKAPK2. Phosphorylated UBE2J1 is rapidly ubiquitinated and subsequently degraded by the proteasome. Expressed in testes.

It is found in the endoplasmic reticulum membrane. It carries out the reaction S-ubiquitinyl-[E1 ubiquitin-activating enzyme]-L-cysteine + [E2 ubiquitin-conjugating enzyme]-L-cysteine = [E1 ubiquitin-activating enzyme]-L-cysteine + S-ubiquitinyl-[E2 ubiquitin-conjugating enzyme]-L-cysteine.. It participates in protein modification; protein ubiquitination. Its function is as follows. Catalyzes the covalent attachment of ubiquitin to other proteins. Functions in the selective degradation of misfolded membrane proteins from the endoplasmic reticulum (ERAD) and is essential for cells to recover from ER stress. Plays a role in MAPKAPK2-dependent translational control of TNF-alpha synthesis. Also acts as a platform for perinuclear positioning of the endosomal system by mediating ubiquitination of SQSTM1 through interaction with the E3 ubiquitin-protein ligase RNF26. Plays a role in male fecundity through the interaction with the E3 ubiquitin-protein ligase RNF133. In terms of biological role, (Microbial infection) Promotes Dengue virus RNA replication by negatively regulating IFN-beta signaling and mediating 'Lys-48'-linked ubiquitination on IRF3. This chain is Ubiquitin-conjugating enzyme E2 J1, found in Homo sapiens (Human).